We begin with the raw amino-acid sequence, 105 residues long: Large ribosomal subunit protein bL21 (105 aa).

It belongs to the bacterial ribosomal protein bL21 family. Part of the 50S ribosomal subunit. Contacts protein L20.

Functionally, this protein binds to 23S rRNA in the presence of protein L20. In Natranaerobius thermophilus (strain ATCC BAA-1301 / DSM 18059 / JW/NM-WN-LF), this protein is Large ribosomal subunit protein bL21.